A 325-amino-acid chain; its full sequence is Tartrate-resistant acid phosphatase type 5 (325 aa).

The signal sequence occupies residues 1 to 21; sequence MDMWTALLILQALLLPSLADG. Positions 33, 71, 74, and 110 each coordinate Fe cation. Asn-116 and Asn-147 each carry an N-linked (GlcNAc...) asparagine glycan. A disulfide bridge connects residues Cys-161 and Cys-219. Residues His-205, His-240, and His-242 each coordinate Fe cation.

The protein belongs to the metallophosphoesterase superfamily. Purple acid phosphatase family. Exists either as monomer or, after proteolytic processing, as a dimer of two chains linked by disulfide bond(s). Requires Fe cation as cofactor.

The protein resides in the lysosome. It catalyses the reaction a phosphate monoester + H2O = an alcohol + phosphate. Involved in osteopontin/bone sialoprotein dephosphorylation. Its expression seems to increase in certain pathological states such as Gaucher and Hodgkin diseases, the hairy cell, the B-cell, and the T-cell leukemias. The protein is Tartrate-resistant acid phosphatase type 5 (ACP5) of Homo sapiens (Human).